The following is a 247-amino-acid chain: AA9 family lytic polysaccharide monooxygenase A (247 aa).

The N-terminal stretch at Met-1 to Ala-19 is a signal peptide. 2 residues coordinate Cu(2+): His-20 and His-100. A disulfide bond links Cys-60 and Cys-185. His-165 is an O2 binding site. Tyr-182 serves as a coordination point for Cu(2+). Residue Asn-193 is glycosylated (N-linked (GlcNAc...) asparagine).

The protein belongs to the polysaccharide monooxygenase AA9 family. It depends on Cu(2+) as a cofactor.

It is found in the secreted. It catalyses the reaction [(1-&gt;4)-beta-D-glucosyl]n+m + reduced acceptor + O2 = 4-dehydro-beta-D-glucosyl-[(1-&gt;4)-beta-D-glucosyl]n-1 + [(1-&gt;4)-beta-D-glucosyl]m + acceptor + H2O.. In terms of biological role, lytic polysaccharide monooxygenase (LPMO) that depolymerizes polysaccharides via the oxidation of scissile alpha- or beta-(1-4)-glycosidic bonds, yielding C4 oxidation products. Catalysis by LPMOs requires the reduction of the active-site copper from Cu(II) to Cu(I) by a reducing agent and H(2)O(2) or O(2) as a cosubstrate. Shows C4-oxidative cleavage of amorphous cellulose and soluble cello-oligosaccharides. Also active on xyloglucan, mixed-linkage beta-glucan, and glucomannan. Not active on crystalline forms of cellulose. Has higher affinity for linear substrates compared to branched substrates. Catalyzes a fast and specific peroxygenase reaction that is at least two orders of magnitude faster than the apparent monooxygenase reaction. The protein is AA9 family lytic polysaccharide monooxygenase A of Schizophyllum commune (strain H4-8 / FGSC 9210) (Split gill fungus).